Consider the following 911-residue polypeptide: Protein translocase subunit SecA (911 aa).

ATP contacts are provided by residues Gln-87, 105-109, and Asp-512; that span reads GEGKT. The disordered stretch occupies residues 861–893; sequence APGLESEQLSEEGAEVAVASAPVRNDQKLGRNE. Cys-895, Cys-897, Cys-906, and His-907 together coordinate Zn(2+).

This sequence belongs to the SecA family. As to quaternary structure, monomer and homodimer. Part of the essential Sec protein translocation apparatus which comprises SecA, SecYEG and auxiliary proteins SecDF-YajC and YidC. It depends on Zn(2+) as a cofactor.

Its subcellular location is the cell inner membrane. It is found in the cytoplasm. The catalysed reaction is ATP + H2O + cellular proteinSide 1 = ADP + phosphate + cellular proteinSide 2.. Functionally, part of the Sec protein translocase complex. Interacts with the SecYEG preprotein conducting channel. Has a central role in coupling the hydrolysis of ATP to the transfer of proteins into and across the cell membrane, serving both as a receptor for the preprotein-SecB complex and as an ATP-driven molecular motor driving the stepwise translocation of polypeptide chains across the membrane. This Pseudomonas putida (strain ATCC 700007 / DSM 6899 / JCM 31910 / BCRC 17059 / LMG 24140 / F1) protein is Protein translocase subunit SecA.